The sequence spans 310 residues: ADP-L-glycero-D-manno-heptose-6-epimerase (310 aa).

NADP(+) contacts are provided by residues 10-11, 31-32, Lys38, Lys53, 75-79, and Asn92; these read FI, DN, and EGACS. Catalysis depends on Tyr140, which acts as the Proton acceptor. Lys144 provides a ligand contact to NADP(+). Residue Asn169 participates in substrate binding. 2 residues coordinate NADP(+): Val170 and Lys178. Residue Lys178 is the Proton acceptor of the active site. Residues Ser180, His187, 201 to 204, Arg209, and Tyr272 contribute to the substrate site; that span reads FEGS.

The protein belongs to the NAD(P)-dependent epimerase/dehydratase family. HldD subfamily. Homopentamer. Requires NADP(+) as cofactor.

It carries out the reaction ADP-D-glycero-beta-D-manno-heptose = ADP-L-glycero-beta-D-manno-heptose. Its pathway is nucleotide-sugar biosynthesis; ADP-L-glycero-beta-D-manno-heptose biosynthesis; ADP-L-glycero-beta-D-manno-heptose from D-glycero-beta-D-manno-heptose 7-phosphate: step 4/4. Functionally, catalyzes the interconversion between ADP-D-glycero-beta-D-manno-heptose and ADP-L-glycero-beta-D-manno-heptose via an epimerization at carbon 6 of the heptose. This chain is ADP-L-glycero-D-manno-heptose-6-epimerase, found in Salmonella paratyphi C (strain RKS4594).